A 345-amino-acid chain; its full sequence is Arginine-hydroxylase NDUFAF5, mitochondrial (345 aa).

Residues 1-36 (MLRPAGLWRLCRRPWAARVPAENLGRREVTSGVSPR) constitute a mitochondrion transit peptide.

This sequence belongs to the methyltransferase superfamily. Interacts with NDUFAF8, leading to stabilize NDUFAF5. Interacts with NDUFS7. Interacts with PYURF (via TRM112 domain); the interaction is direct and stabilizes NDUFAF5 protein.

The protein localises to the mitochondrion inner membrane. Arginine hydroxylase that mediates hydroxylation of 'Arg-111' of NDUFS7 and is involved in the assembly of mitochondrial NADH:ubiquinone oxidoreductase complex (complex I, MT-ND1) at early stages. May also have methyltransferase activity. The protein is Arginine-hydroxylase NDUFAF5, mitochondrial of Homo sapiens (Human).